A 243-amino-acid chain; its full sequence is Type III pantothenate kinase (243 aa).

Residue 6–13 (DIGNTVAK) participates in ATP binding. Residues Y86 and 93-96 (GYDR) contribute to the substrate site. The active-site Proton acceptor is the D95. Residue D116 coordinates K(+). T119 serves as a coordination point for ATP. T171 contributes to the substrate binding site.

This sequence belongs to the type III pantothenate kinase family. Homodimer. The cofactor is NH4(+). Requires K(+) as cofactor.

The protein localises to the cytoplasm. It carries out the reaction (R)-pantothenate + ATP = (R)-4'-phosphopantothenate + ADP + H(+). Its pathway is cofactor biosynthesis; coenzyme A biosynthesis; CoA from (R)-pantothenate: step 1/5. Functionally, catalyzes the phosphorylation of pantothenate (Pan), the first step in CoA biosynthesis. The polypeptide is Type III pantothenate kinase (Bacteroides fragilis (strain ATCC 25285 / DSM 2151 / CCUG 4856 / JCM 11019 / LMG 10263 / NCTC 9343 / Onslow / VPI 2553 / EN-2)).